Reading from the N-terminus, the 594-residue chain is Jacalin-related lectin 44 (594 aa).

The tract at residues 1-23 (MIQKLGAKGIKSDERNQREWDDG) is disordered. 4 consecutive Jacalin-type lectin domains span residues 2–148 (IQKL…YFIS), 151–293 (PTRL…YFST), 296–441 (PNKL…YYRP), and 448–588 (VKRL…HVIP). Residues 10-23 (IKSDERNQREWDDG) are compositionally biased toward basic and acidic residues.

Belongs to the jacalin lectin family.

The sequence is that of Jacalin-related lectin 44 (JAL44) from Arabidopsis thaliana (Mouse-ear cress).